We begin with the raw amino-acid sequence, 1416 residues long: DNA-directed RNA polymerase subunit beta' (1416 aa).

Residues Cys60, Cys62, Cys75, and Cys78 each contribute to the Zn(2+) site. Positions 449, 451, and 453 each coordinate Mg(2+). 4 residues coordinate Zn(2+): Cys781, Cys855, Cys862, and Cys865.

Belongs to the RNA polymerase beta' chain family. In terms of assembly, the RNAP catalytic core consists of 2 alpha, 1 beta, 1 beta' and 1 omega subunit. When a sigma factor is associated with the core the holoenzyme is formed, which can initiate transcription. It depends on Mg(2+) as a cofactor. The cofactor is Zn(2+).

It catalyses the reaction RNA(n) + a ribonucleoside 5'-triphosphate = RNA(n+1) + diphosphate. Functionally, DNA-dependent RNA polymerase catalyzes the transcription of DNA into RNA using the four ribonucleoside triphosphates as substrates. The polypeptide is DNA-directed RNA polymerase subunit beta' (Treponema pallidum (strain Nichols)).